A 379-amino-acid chain; its full sequence is uncharacterized protein (379 aa).

An ATP-binding site is contributed by 29–36; that stretch reads GPLNSGKT.

This sequence belongs to the archaeal ATPase family.

This is an uncharacterized protein from Methanocaldococcus jannaschii (strain ATCC 43067 / DSM 2661 / JAL-1 / JCM 10045 / NBRC 100440) (Methanococcus jannaschii).